The following is a 252-amino-acid chain: Flap endonuclease Xni (252 aa).

A Mg(2+)-binding site is contributed by aspartate 105. The 91-residue stretch at valine 161–glutamate 251 folds into the 5'-3' exonuclease domain. Residues leucine 172, alanine 173, proline 181, valine 183, and isoleucine 186 each coordinate K(+). The tract at residues glycine 185–serine 190 is interaction with DNA.

The protein belongs to the Xni family. The cofactor is Mg(2+). Requires K(+) as cofactor.

In terms of biological role, has flap endonuclease activity. During DNA replication, flap endonucleases cleave the 5'-overhanging flap structure that is generated by displacement synthesis when DNA polymerase encounters the 5'-end of a downstream Okazaki fragment. The chain is Flap endonuclease Xni from Shewanella halifaxensis (strain HAW-EB4).